A 580-amino-acid chain; its full sequence is 2-succinyl-5-enolpyruvyl-6-hydroxy-3-cyclohexene-1-carboxylate synthase (580 aa).

The protein belongs to the TPP enzyme family. MenD subfamily. In terms of assembly, homodimer. Mg(2+) serves as cofactor. The cofactor is Mn(2+). Requires thiamine diphosphate as cofactor.

The enzyme catalyses isochorismate + 2-oxoglutarate + H(+) = 5-enolpyruvoyl-6-hydroxy-2-succinyl-cyclohex-3-ene-1-carboxylate + CO2. Its pathway is quinol/quinone metabolism; 1,4-dihydroxy-2-naphthoate biosynthesis; 1,4-dihydroxy-2-naphthoate from chorismate: step 2/7. It functions in the pathway quinol/quinone metabolism; menaquinone biosynthesis. Its function is as follows. Catalyzes the thiamine diphosphate-dependent decarboxylation of 2-oxoglutarate and the subsequent addition of the resulting succinic semialdehyde-thiamine pyrophosphate anion to isochorismate to yield 2-succinyl-5-enolpyruvyl-6-hydroxy-3-cyclohexene-1-carboxylate (SEPHCHC). This Listeria innocua serovar 6a (strain ATCC BAA-680 / CLIP 11262) protein is 2-succinyl-5-enolpyruvyl-6-hydroxy-3-cyclohexene-1-carboxylate synthase.